The primary structure comprises 119 residues: Protein yippee-like 3 (119 aa).

Positions 19-116 (RRYSCVHCRA…IELSHMIKDN (98 aa)) constitute a Yippee domain. Residues Cys-23, Cys-26, Cys-79, and Cys-82 each coordinate Zn(2+).

This sequence belongs to the yippee family.

It is found in the nucleus. The protein localises to the nucleolus. Functionally, may be involved in proliferation and apoptosis in myeloid precursor cells. The chain is Protein yippee-like 3 (ypel3) from Oryzias latipes (Japanese rice fish).